Consider the following 707-residue polypeptide: Solute carrier family 15 member 1 (707 aa).

The chain crosses the membrane as a helical span at residues 1 to 21; that stretch reads MGMSKSLSCFGYPLSIFFIVV. At 22-53 the chain is on the extracellular side; the sequence is NEFCERFSYYGMRALLILYFRNFIGWDDNLST. N-linked (GlcNAc...) asparagine glycosylation occurs at asparagine 50. Residues 54-74 traverse the membrane as a helical segment; sequence VIYHTFVALCYLTPILGALIA. Topologically, residues 75 to 82 are cytoplasmic; that stretch reads DAWLGKFK. The chain crosses the membrane as a helical span at residues 83–103; the sequence is TIVWLSIVYTIGQAVTSLSSV. The Extracellular portion of the chain corresponds to 104–118; that stretch reads NELTDNNHDGTPDSL. Residues 119–139 traverse the membrane as a helical segment; the sequence is PVHVAVCMIGLLLIALGTGGI. Topologically, residues 140–161 are cytoplasmic; it reads KPCVSAFGGDQFEEGQEKQRNR. A helical membrane pass occupies residues 162–182; that stretch reads FFSIFYLAINAGSLLSTIITP. Topologically, residues 183–198 are extracellular; it reads MVRVQQCGIHVKQACY. The helical transmembrane segment at 199–219 threads the bilayer; it reads PLAFGIPAILMAVSLIVFIIG. The Cytoplasmic portion of the chain corresponds to 220–276; the sequence is SGMYKKFKPQGNILSKVVKCICFAIKNRFRHRSKQFPKRAHWLDWAKEKYDERLIAQ. A helical transmembrane segment spans residues 277-297; it reads IKMVTRVLFLYIPLPMFWALF. Residues 298–327 are Extracellular-facing; sequence DQQGSRWTLQATTMSGRIGILEIQPDQMQT. The helical transmembrane segment at 328 to 348 threads the bilayer; it reads VNTILIIILVPIMDAVVYPLI. The Cytoplasmic segment spans residues 349 to 361; the sequence is AKCGLNFTSLKKM. The chain crosses the membrane as a helical span at residues 362–382; it reads TIGMFLASMAFVAAAILQVEI. The Extracellular segment spans residues 383–583; the sequence is DKTLPVFPKA…PPNTMNMAWQ (201 aa). The extracellular domain (ECD) stretch occupies residues 383-583; the sequence is DKTLPVFPKA…PPNTMNMAWQ (201 aa). 3 N-linked (GlcNAc...) asparagine glycosylation sites follow: asparagine 439, asparagine 498, and asparagine 513. Residues 584–604 form a helical membrane-spanning segment; that stretch reads IPQYFLITSGEVVFSITGLEF. Topologically, residues 605–618 are cytoplasmic; the sequence is SYSQAPSNMKSVLQ. Residues 619–639 form a helical membrane-spanning segment; the sequence is AGWLLTVAVGNIIVLIVAGAG. At 640–644 the chain is on the extracellular side; that stretch reads QINKQ. Residues 645–665 traverse the membrane as a helical segment; the sequence is WAEYILFAALLLVVCVIFAIM. At 666–707 the chain is on the cytoplasmic side; it reads ARFYTYVNPAEIEAQFEEDEKKKNPEKNDLYPSLAPVSQTQM. Positions 682 to 707 are disordered; the sequence is EEDEKKKNPEKNDLYPSLAPVSQTQM. A compositionally biased stretch (basic and acidic residues) spans 684-694; the sequence is DEKKKNPEKND.

The protein belongs to the major facilitator superfamily. Proton-dependent oligopeptide transporter (POT/PTR) (TC 2.A.17) family. As to quaternary structure, interacts (via extracellular domain region) with trypsin. As to expression, intestine, kidney, liver and low in brain.

It is found in the apical cell membrane. The catalysed reaction is a dipeptide(out) + H(+)(out) = a dipeptide(in) + H(+)(in). The enzyme catalyses an L-amino acid tripeptide(out) + H(+)(out) = an L-amino acid tripeptide(in) + H(+)(in). It carries out the reaction L-alanyl-L-lysine(out) + H(+)(out) = L-alanyl-L-lysine(in) + H(+)(in). It catalyses the reaction L-alanyl-L-proline(out) + H(+)(out) = L-alanyl-L-proline(in) + H(+)(in). The catalysed reaction is L-alanyl-L-valine(out) + H(+)(out) = L-alanyl-L-valine(in) + H(+)(in). The enzyme catalyses carnosine(out) + H(+)(out) = carnosine(in) + H(+)(in). It carries out the reaction glycyl-L-glutamine(out) + H(+)(out) = glycyl-L-glutamine(in) + H(+)(in). It catalyses the reaction glycyl-L-leucine(out) + H(+)(out) = glycyl-L-leucine(in) + H(+)(in). The catalysed reaction is glycyl-L-proline(out) + H(+)(out) = glycyl-L-proline(in) + H(+)(in). The enzyme catalyses glycyl-sarcosine(out) + H(+)(out) = glycyl-sarcosine(in) + H(+)(in). It carries out the reaction L-leucyl-L-leucine(out) + H(+)(out) = L-leucyl-L-leucine(in) + H(+)(in). It catalyses the reaction L-leucyl-L-proline(out) + H(+)(out) = L-leucyl-L-proline(in) + H(+)(in). The catalysed reaction is L-phenylalanyl-L-leucine(out) + H(+)(out) = L-phenylalanyl-L-leucine(in) + H(+)(in). The enzyme catalyses L-phenylalanyl-L-phenylalanine(out) + H(+)(out) = L-phenylalanyl-L-phenylalanine(in) + H(+)(in). It carries out the reaction L-lysyl-glycine(out) + H(+)(out) = L-lysyl-glycine(in) + H(+)(in). It catalyses the reaction L-tyrosylglycine(out) + H(+)(out) = L-tyrosylglycine(in) + H(+)(in). The catalysed reaction is L-alanyl-L-aspartate(out) + 2 H(+)(out) = L-alanyl-L-aspartate(in) + 2 H(+)(in). The enzyme catalyses L-aspartyl-glycine(out) + 2 H(+)(out) = L-aspartyl-glycine(in) + 2 H(+)(in). It carries out the reaction glycyl-L-aspartate(out) + 2 H(+)(out) = glycyl-L-aspartate(in) + 2 H(+)(in). It catalyses the reaction glycyl-L-glutamate(out) + 2 H(+)(out) = glycyl-L-glutamate(in) + 2 H(+)(in). The catalysed reaction is L-alanyl-L-leucyl-L-alanine(out) + H(+)(out) = L-alanyl-L-leucyl-L-alanine(in) + H(+)(in). The enzyme catalyses L-alanyl-L-prolylglycine(out) + H(+)(out) = L-alanyl-L-prolylglycine(in) + H(+)(in). It carries out the reaction glycylglycyl-L-isoleucine(out) + H(+)(out) = glycylglycyl-L-isoleucine(in) + H(+)(in). It catalyses the reaction glycylglycyl-L-proline(out) + H(+)(out) = glycylglycyl-L-proline(in) + H(+)(in). The catalysed reaction is L-methionyl-L-phenylalanyl-L-methionine(out) + H(+)(out) = L-methionyl-L-phenylalanyl-L-methionine(in) + H(+)(in). The enzyme catalyses N-acetyl-D-muramoyl-L-alanyl-D-isoglutamine(out) + 2 H(+)(out) = N-acetyl-D-muramoyl-L-alanyl-D-isoglutamine(in) + 2 H(+)(in). It carries out the reaction N(alpha)-formyl-L-methionyl-L-leucyl-L-phenylalanine(out) + 2 H(+)(out) = N(alpha)-formyl-L-methionyl-L-leucyl-L-phenylalanine(in) + 2 H(+)(in). Electrogenic proton-coupled amino-acid transporter that transports oligopeptides of 2 to 4 amino acids with a preference for dipeptides. Transports neutral and monovalently charged peptides with a proton to peptide stoichiometry of 1:1 or 2:1. Primarily responsible for the absorption of dietary di- and tripeptides from the small intestinal lumen. Mediates transepithelial transport of muramyl and N-formylated bacterial dipeptides contributing to recognition of pathogenic bacteria by the mucosal immune system. This Oryctolagus cuniculus (Rabbit) protein is Solute carrier family 15 member 1 (SLC15A1).